Here is an 800-residue protein sequence, read N- to C-terminus: Cation/H(+) antiporter 9 (800 aa).

The next 12 helical transmembrane spans lie at 43 to 63 (VIFGYALPLLELQIILIFVCI), 73 to 93 (IGIPRFVSNILAGLILGPQLL), 110 to 130 (NVALEGVARLGLVMFTFLMGV), 145 to 165 (IVIAVSSFFVTMISGLAFRNF), 186 to 206 (VIVSIQAVTLLPVITHLVYEL), 216 to 236 (IAISTAAVSDFLGFLTLVCIS), 247 to 267 (GIANRDIVALIILVLVILFIF), 287 to 306 (VYLYVTILTAIAASIYLSVF), 338 to 358 (LVTNIFFPISIAVMAMKADVV), 371 to 391 (ILLLGLTVVVKWTASFVPCLI), 401 to 421 (VIIATIMNYKGFVDLCFFDVA), and 430 to 450 (ATYTVMIIYVLLNAGILPTII).

It belongs to the monovalent cation:proton antiporter 2 (CPA2) transporter (TC 2.A.37) family. CHX (TC 2.A.37.4) subfamily.

Its subcellular location is the membrane. Its function is as follows. May operate as a cation/H(+) antiporter. The protein is Cation/H(+) antiporter 9 (CHX9) of Arabidopsis thaliana (Mouse-ear cress).